Reading from the N-terminus, the 377-residue chain is Nitric oxide reductase FlRd-NAD(+) reductase (377 aa).

It belongs to the FAD-dependent oxidoreductase family. It depends on FAD as a cofactor.

The protein localises to the cytoplasm. It catalyses the reaction 2 reduced [nitric oxide reductase rubredoxin domain] + NAD(+) + H(+) = 2 oxidized [nitric oxide reductase rubredoxin domain] + NADH. It functions in the pathway nitrogen metabolism; nitric oxide reduction. Functionally, one of at least two accessory proteins for anaerobic nitric oxide (NO) reductase. Reduces the rubredoxin moiety of NO reductase. This chain is Nitric oxide reductase FlRd-NAD(+) reductase, found in Salmonella typhi.